The following is a 178-amino-acid chain: NADH-quinone oxidoreductase subunit I 2 (178 aa).

4Fe-4S ferredoxin-type domains are found at residues 46-78 (IVLTRDPDGGERCVACYLCSAVCPVSCISMQAA) and 88-117 (AWFRINFARCIYCGLCEEACPTSAIQLTPF). 8 residues coordinate [4Fe-4S] cluster: C58, C61, C64, C68, C97, C100, C103, and C107.

It belongs to the complex I 23 kDa subunit family. In terms of assembly, NDH-1 is composed of 14 different subunits. Subunits NuoA, H, J, K, L, M, N constitute the membrane sector of the complex. [4Fe-4S] cluster serves as cofactor.

It is found in the cell inner membrane. It catalyses the reaction a quinone + NADH + 5 H(+)(in) = a quinol + NAD(+) + 4 H(+)(out). Its function is as follows. NDH-1 shuttles electrons from NADH, via FMN and iron-sulfur (Fe-S) centers, to quinones in the respiratory chain. The immediate electron acceptor for the enzyme in this species is believed to be ubiquinone. Couples the redox reaction to proton translocation (for every two electrons transferred, four hydrogen ions are translocated across the cytoplasmic membrane), and thus conserves the redox energy in a proton gradient. The sequence is that of NADH-quinone oxidoreductase subunit I 2 from Syntrophobacter fumaroxidans (strain DSM 10017 / MPOB).